A 334-amino-acid polypeptide reads, in one-letter code: Phosphate acyltransferase (334 aa).

It belongs to the PlsX family. As to quaternary structure, homodimer. Probably interacts with PlsY.

It is found in the cytoplasm. It catalyses the reaction a fatty acyl-[ACP] + phosphate = an acyl phosphate + holo-[ACP]. It functions in the pathway lipid metabolism; phospholipid metabolism. Catalyzes the reversible formation of acyl-phosphate (acyl-PO(4)) from acyl-[acyl-carrier-protein] (acyl-ACP). This enzyme utilizes acyl-ACP as fatty acyl donor, but not acyl-CoA. The sequence is that of Phosphate acyltransferase from Caldicellulosiruptor bescii (strain ATCC BAA-1888 / DSM 6725 / KCTC 15123 / Z-1320) (Anaerocellum thermophilum).